The sequence spans 655 residues: MEKVTNSAAAKPQGNNKKQESAYNGAGKDKKKPNLDIETTDSDLLSDMHLDGTTEQKVGTLFSKVFEDTDYGTGPSTSSKEAAAAKTADHERRLQAEADVNNNDAEKAGQLAKESVATQGASATERKQAFSLGLEHTSPIQVNGAALACPLVRKSLPPGEANSCPPPPKRDPAAVKSAVKIIKVKAPEEGNNNNDEKEMSTETSEPHKTDSVEEGRRVVMWIIFPIKTKFFFKYFWEQTACLVQRTNPKYFQSLISFKMLDEILIRHNLDFTVNLDVTTYKNGKRETLNPEGRALPPAVWGFYSEGCSIRLLHASAYLTRLREVCTVLQEFFHCKVGANMYLTPPNSQGFAPHYDDIEAFVIQVEGRKRWLLYDPPKEADHLARISSGNYNQEQLGKPIIDEVLSAGDVLYFPRGTVHQAITEEQQHSLHITLSVYQQQAYANLLETLMPMVLKKAVDRSVALRRGLPLHTFQILGNAYKANDCGSRQLLVENVQKLVAKYLMPSEDDIDEAVDQMAKKFQHEALPPIVLPSEEVRTVHGARSGADDQGNCVCDYKFNEKTSVRLLRANILRLVTEPDGSVRIYHHVDNGLDYCKYEPYFMEILPEKAKAVELLISAYPYYLTIDQLPLKSSARKVEVATALWEHGLLMTEKPFK.

Positions 1-16 (MEKVTNSAAAKPQGNN) are enriched in polar residues. 2 disordered regions span residues 1 to 48 (MEKV…LSDM) and 67 to 122 (EDTD…QGAS). A compositionally biased stretch (low complexity) spans 76–86 (STSSKEAAAAK). Positions 87–96 (TADHERRLQA) are enriched in basic and acidic residues. S131 is subject to Phosphoserine. T137 carries the post-translational modification Phosphothreonine. S138 carries the phosphoserine modification. The segment at 185 to 210 (KAPEEGNNNNDEKEMSTETSEPHKTD) is disordered. Residues 194–210 (NDEKEMSTETSEPHKTD) are compositionally biased toward basic and acidic residues. The JmjC domain occupies 307–452 (CSIRLLHASA…NLLETLMPMV (146 aa)). Fe cation is bound by residues H353, D355, and H418.

Belongs to the ROX family. NO66 subfamily. Requires Fe(2+) as cofactor.

The protein localises to the nucleus. It catalyses the reaction N(6),N(6)-dimethyl-L-lysyl(36)-[histone H3] + 2 2-oxoglutarate + 2 O2 = L-lysyl(36)-[histone H3] + 2 formaldehyde + 2 succinate + 2 CO2. In terms of biological role, oxygenase that can act as both a histone lysine demethylase and a ribosomal histidine hydroxylase. Specifically demethylates 'Lys-4' (H3K4me) and 'Lys-36' (H3K36me) of histone H3, thereby playing a central role in histone code. The polypeptide is Bifunctional lysine-specific demethylase and histidyl-hydroxylase NO66 (Drosophila sechellia (Fruit fly)).